A 1230-amino-acid chain; its full sequence is Myosin-1 (1230 aa).

Residues 1–32 (MGISRRPKADKNASAADSAPGGKPNIQKAQFD) form a disordered region. The Myosin motor domain occupies 39–713 (VGVSDLTLIS…TLFALEHMRD (675 aa)). 132 to 139 (GESGAGKT) is a binding site for ATP. The tract at residues 403–485 (SIGILDIYGF…PGVFSAMKDA (83 aa)) is actin-binding. IQ domains are found at residues 717-737 (HNMAARIQRVWRAFLQIRIEA) and 738-763 (ATRIQRMFRKKREGKEFLELREKGHQ). The region spanning 771–961 (RRRYSLLGSR…TIHTQAGEPP (191 aa)) is the TH1 domain. Disordered regions lie at residues 945–1018 (QDHY…AARP), 1033–1065 (TRNTSVQSTQSTRAVPPPPPPAPPAPPPAPVSK), and 1116–1230 (AYLE…EDDW). A compositionally biased stretch (polar residues) spans 1033 to 1045 (TRNTSVQSTQSTR). 2 stretches are compositionally biased toward pro residues: residues 1047–1062 (VPPPPPPAPPAPPPAP) and 1122–1142 (TPPPPPPVATRPAPPPAPGPP). The 60-residue stretch at 1064–1123 (SKEPQYRVLYEFAGQSANEFSLKQGEIVTVLQKETNGWWLTKNVRGQGWAPTAYLEEVTP) folds into the SH3 domain. Over residues 1179-1214 (RDSGMSISSNGSGNNSGRSTPTPSLAGGLAEALRAR) the composition is skewed to low complexity.

It belongs to the TRAFAC class myosin-kinesin ATPase superfamily. Myosin family.

Its subcellular location is the cytoplasm. The protein resides in the cytoskeleton. It is found in the actin patch. Functionally, type-I myosin implicated in the organization of the actin cytoskeleton. Required for proper actin cytoskeleton polarization. At the cell cortex, assembles in patch-like structures together with proteins from the actin-polymerizing machinery and promotes actin assembly. Functions as actin nucleation-promoting factor (NPF) for the Arp2/3 complex. This is Myosin-1 (myoA) from Sclerotinia sclerotiorum (strain ATCC 18683 / 1980 / Ss-1) (White mold).